A 418-amino-acid polypeptide reads, in one-letter code: tRNA-2-methylthio-N(6)-dimethylallyladenosine synthase (418 aa).

The region spanning 2-118 is the MTTase N-terminal domain; the sequence is PGYYLWTIGC…WREIPEGFIL (117 aa). Residues C11, C47, C81, C134, C138, and C141 each contribute to the [4Fe-4S] cluster site. A Radical SAM core domain is found at 120–351; that stretch reads LRPPVSANVT…EDLQKETVGK (232 aa). In terms of domain architecture, TRAM spans 346 to 414; the sequence is KETVGKANAA…PWSLQAKLVN (69 aa).

Belongs to the methylthiotransferase family. MiaB subfamily. Monomer. It depends on [4Fe-4S] cluster as a cofactor.

The protein resides in the cytoplasm. The catalysed reaction is N(6)-dimethylallyladenosine(37) in tRNA + (sulfur carrier)-SH + AH2 + 2 S-adenosyl-L-methionine = 2-methylsulfanyl-N(6)-dimethylallyladenosine(37) in tRNA + (sulfur carrier)-H + 5'-deoxyadenosine + L-methionine + A + S-adenosyl-L-homocysteine + 2 H(+). In terms of biological role, catalyzes the methylthiolation of N6-(dimethylallyl)adenosine (i(6)A), leading to the formation of 2-methylthio-N6-(dimethylallyl)adenosine (ms(2)i(6)A) at position 37 in tRNAs that read codons beginning with uridine. In Dehalococcoides mccartyi (strain ATCC BAA-2100 / JCM 16839 / KCTC 5957 / BAV1), this protein is tRNA-2-methylthio-N(6)-dimethylallyladenosine synthase.